The primary structure comprises 162 residues: NADH-quinone oxidoreductase subunit I (162 aa).

2 4Fe-4S ferredoxin-type domains span residues 52–82 (LRRYPNGEERCIACKLCEAICPAQAITIEAG) and 93–122 (TRYDIDMVKCIYCGMCQEACPVDAIVEGPN). [4Fe-4S] cluster-binding residues include cysteine 62, cysteine 65, cysteine 68, cysteine 72, cysteine 102, cysteine 105, cysteine 108, and cysteine 112.

The protein belongs to the complex I 23 kDa subunit family. NDH-1 is composed of 14 different subunits. Subunits NuoA, H, J, K, L, M, N constitute the membrane sector of the complex. The cofactor is [4Fe-4S] cluster.

The protein localises to the cell inner membrane. The catalysed reaction is a quinone + NADH + 5 H(+)(in) = a quinol + NAD(+) + 4 H(+)(out). In terms of biological role, NDH-1 shuttles electrons from NADH, via FMN and iron-sulfur (Fe-S) centers, to quinones in the respiratory chain. The immediate electron acceptor for the enzyme in this species is believed to be ubiquinone. Couples the redox reaction to proton translocation (for every two electrons transferred, four hydrogen ions are translocated across the cytoplasmic membrane), and thus conserves the redox energy in a proton gradient. The polypeptide is NADH-quinone oxidoreductase subunit I (Methylorubrum populi (strain ATCC BAA-705 / NCIMB 13946 / BJ001) (Methylobacterium populi)).